A 744-amino-acid chain; its full sequence is MVRPGLSAAAEERQRKLQEYLAAKGKLKCQNTKPYLKAKNNCPNPPHSKSTIGPKKDVTNHVALPVKTTRSINIKLQSRPANITRSQRPKLEPPKLGKRLTSESVSSNPNGKPPGNSQQLRGFGSSTDGKQPRKTMGSLNVQKLKTTKQQVTDQRTAKGTDPVDNTHVENESLGGCLKEMNKENLPQDLPNSERKPNPESWTINKPQTNQTKSSLASTREVLDKSSVNSAALKEGVIKPFVEETQISVPPGKSQKLSRVADLIRPGGKPPKTLPSHFVQTLNRTQATKKTVVKDIKSIKVNRSKYERPNEAKLQSYTVTEQKVKHSKPSTHPSVLQGGCNHRHPNIKQDHKPTQACCRPQTSYALQKSKAISQRPNLTVGSFNSVIPSTPSIRANGATGNKCNNSCQQRARTLDSKFKSAPPQKCFLNKTAPRTQAGGPTISGRGVPNGAQTNPCKKIAAEDRRKQLEEWRKSKGKIYKRPPMELKTKRKIIEEMNISFWKSMEKEEEEKKAQLELSNKINNTLTECLQLIERGVLSNEVFAILSSIPEAEKFAKFWICKAKLLASKGTFDVIGLYEEAIRNGATPIQELREVVLNILQDRNRTTEGMTSNSLVAETNITSIEELAKKTESGASCLSPKESEQMSVTPQITKSEQDGHPGIKLQIAPIPRINGMPEVQDMKLITPVRRSARIERAVSRYPEMLQEHDLVVASLNELLEVEETECFIFRKNEALPVTLGFPVSES.

Disordered regions lie at residues 35–56 (YLKA…GPKK), 76–169 (LQSR…THVE), 182–216 (KENL…SSLA), 317–337 (TVTE…VLQG), and 428–452 (NKTA…GAQT). Polar residues-rich tracts occupy residues 76–86 (LQSRPANITRS), 102–129 (SESV…STDG), and 137–154 (GSLN…VTDQ). Residue lysine 195 forms a Glycyl lysine isopeptide (Lys-Gly) (interchain with G-Cter in SUMO1); alternate linkage. A Glycyl lysine isopeptide (Lys-Gly) (interchain with G-Cter in SUMO2); alternate cross-link involves residue lysine 195. Residues 199-216 (ESWTINKPQTNQTKSSLA) show a composition bias toward polar residues. At serine 744 the chain carries Phosphoserine.

It belongs to the CKAP2 family. Ubiquitinated by the anaphase promoting complex/cyclosome (APC/C).

The protein localises to the cytoplasm. Its subcellular location is the cytoskeleton. It is found in the spindle pole. In terms of biological role, microtubule-associated protein required for mitotic spindle formation and cell-cycle progression in neural progenitor cells. This Bos taurus (Bovine) protein is Cytoskeleton-associated protein 2-like (CKAP2L).